Consider the following 53-residue polypeptide: uncharacterized protein (53 aa).

Residues 13–35 (FLLHSFTFPIAHCPSFSWASFFF) traverse the membrane as a helical segment.

The protein localises to the membrane. This is an uncharacterized protein from Saccharomyces cerevisiae (strain ATCC 204508 / S288c) (Baker's yeast).